The primary structure comprises 2209 residues: MDEYVQELKGLIRKHIPDRCEFAHQKVTFLSQVHPSPLLTEGFKLLSSLVELESCEAHACQANTDQRFVDVILSDNGILCPTLPKVIPDGFKLTGKTLILLETFVRVNPDEFEKKWKADMSKLLNLKHDLQKSGVTLVPIVDGRSNYNNRFVADWVIERMRWLLIEILKASKSMLEIDIEDQEYQRLIHSLSNVKNQSLGLENLEHLKRNSLDYDERLNESLFIGLKGDIRESTVREELIKLKMWFKDEVFSKGLGKFKLTDRRELLESLSSLGAHLDSDVSSCPFCNNKLMEIVYNVTFSSVERTDGAATVDQQFSTTHTNIEKHYLSVLSLCNKIKGLKVFNTRRNTLLFLDLIMVNLMVDISESCQDAIESLRKSGLIVGQMVMLVNDRVLDILEAIKLIRKKIGTNPNWVKNCSKILERSHPEIWLQLNTLIRQPDFNSLISIAQYLVSDRPIMRYSVERGSDKICRHKLFQEMSSFEQMRLFKTLSSISLSLINSMKTSFSSRLLVNEREFSKYFGNVRLRECYAQRFYLAESLVGFLFYQKTGERSRCYSVYLSDNGVMSEQGSFYCDPKRFFLPVFSDEVLAGMCEEMTSWLDFDTGLMNDTGPILRLLVLAILCSPSKRNQTFLQGLRYFLMAFANQIHHIDLISKLVVECKSSSEVVVQRLAVGLFIRLLGGESDASSFFSRRFKYLLNVSYLCHLITKETPDRLTDQIKCFEKFIEPKVKFGCAVVNPSLNGKLTVDQEDIMINGLKKFFSKSLRDTEDVQTPGVCKELLNYCVSLFNRGKLKVSGELKNNPFRPNITSTALDLSSNKSVVIPKLDELGNILSTYDKEKLVSACVSSMAERFKTKGRYNLDPESTDYLILKNLTGLVSAGPKAKSSQEELSLMYETLTEEQVESFNEIKYDVQVALAKMADNSVNTRIKNLGRADNSVKNGNNPLDNLWSPFGVMKEIRAEVSLHEVKDFDPDVLPSDVYKELCDAVYKSSEKCNFFLEEVLDVCPLGLLLKNLTTSSYMEEEYFMCFKYLLIQGHFDQKLGSYEHKSRSRLGFTDETLRLKDEVRLSIRESNSEAIADKLDKSYFTNAALRNLCFYSEDSPTEFTSISSNSGNLKFGLSYKEQVGSNRELYVGDLNTKLMTRLVEDFSEAVGNSMKYTCLNSEKEFERAICDMKMAVNNGDLSCSYDHSKWGPTMSPALFLALLQMLELRTPVDRSKIDLDSVKSILKWHLHKVVEVPINVAEAYCIGKLKRSLGLMGCGSTSLSEEFFHQTMQLSGQIPSHIMSVLDMGQGILHNTSDLYGLITEQFLCYALDLLYDVIPVSYTSSDDQITLVKTPSLDIEGGSDAAEWLEMICFHEFLSSKLNKFVSPKSVIGTFVAEFKSRFFVMGEETPLLTKFVSAALHNVKCKTPTQLSETIDTICDQCIANGVSTKIVARISKRVNQLIRYSGYGDTPFGAIEDQDVKDWVDGSRGYRLQRKIEAIFYDDKETSFIRNCARKVFNDIKRGRIFEENLINLIGRGGDEALTGFLQYAGCSEQEVNRVLNYRWVNLSSFGDLRLVLRTKLMTSRRVLEREEVPTLIKTLQSKLSRNFTKGVKKILAESINKSAFQSSVASGFIGFCKSMGSKCVRDGKGGFLYIKEVYSGINVCICEICALKPKIIYCNDSLNKVSQFSKPILWDYFSLVLTNACELGEWVFSTVKEPQKPLVLNNQNFFWAVKPKVVRQIEDQLGMNHVLQSIRRNYPVLFDEHLAPFMNDLQVSRTMDSGRLKFLDVCIALDMMNENLGIISHLLKTRDNSVYIVKQSDCALAHIRQSSYTDWELGLSPQQICTNFKTQLVLSSMVNPLVLSTSCLKSFFWFNEVLELEDDSQIELAELTDFALMVKNQNVSRAMFVEDIAMGYVVSNFEGVRISLSNVMVDGVQLPPKEKAPDVGVLFGLKAENVIVGLVVQIDHVRMSTKFKLRRKMVYSFSLECTMDVGDIQNKEVILKVVAVDQSVSGSGGNHMLLDGVPVIASLPLFTGQASFDLAAMLIESNLAGSNDNFLMSNVTLDLGGFSPELSDKYSYRLSGPENQEDPLVLKDGAFYVGGERLSTYKVELTGDLVVKALGALEDDEGVVSMLHQLWPYLKATSQVILFQQEDFTIVHDLYKIQLTKSIESFGEWIEFTNFKVAYSKSLKELVISDTQGSFRLKGVMCRPLANTLQVEDIE.

Positions 26-284 are endonuclease; the sequence is KVTFLSQVHP…AHLDSDVSSC (259 aa). E51, D89, and E102 together coordinate Mn(2+). K115 is a catalytic residue. The region spanning 1172–1369 is the RdRp catalytic domain; that stretch reads CDMKMAVNNG…FLSSKLNKFV (198 aa). Residue D1330 participates in Mg(2+) binding.

The protein belongs to the Bunyavirales RNA polymerase family. In terms of assembly, homomultimer; the oligomeric structure is essential for the polymerase activity. Interacts with nucleoprotein N. Interacts with protein Z; this interaction inhibits viral transcription and replication, Z partially blocks the product exit tunnel for the releasing nascent RNA product. Requires Mn(2+) as cofactor. Mg(2+) is required as a cofactor.

Its subcellular location is the virion. It localises to the host cytoplasm. The enzyme catalyses RNA(n) + a ribonucleoside 5'-triphosphate = RNA(n+1) + diphosphate. Functionally, RNA-dependent RNA polymerase, which is responsible for the replication and transcription of the viral RNA genome using antigenomic RNA as an intermediate. During transcription, synthesizes subgenomic RNAs and assures their capping by a cap-snatching mechanism, which involves the endonuclease activity cleaving the host capped pre-mRNAs. These short capped RNAs are then used as primers for viral transcription. The 3'-end of subgenomic mRNAs molecules are heterogeneous and not polyadenylated. The replicase function is to direct synthesis of antigenomic and genomic RNA which are encapsidated and non capped. As a consequence of the use of the same enzyme for both transcription and replication, these mechanisms need to be well coordinated. These processes may be regulated by proteins N and Z in a dose-dependent manner. Z protein inhibits the viral polymerase L und thus the viral transcription and RNA synthesis. In Calomys callosus (Large vesper mouse), this protein is RNA-directed RNA polymerase L.